The chain runs to 287 residues: Large ribosomal subunit protein uL2 (287 aa).

The interval 203-287 (LSAGKAGRNR…SKRGRGGRES (85 aa)) is disordered. Basic residues-rich tracts occupy residues 209 to 220 (GRNRWKGRRPKV) and 258 to 287 (KTRK…GRES).

This sequence belongs to the universal ribosomal protein uL2 family. As to quaternary structure, part of the 50S ribosomal subunit. Forms a bridge to the 30S subunit in the 70S ribosome.

Functionally, one of the primary rRNA binding proteins. Required for association of the 30S and 50S subunits to form the 70S ribosome, for tRNA binding and peptide bond formation. It has been suggested to have peptidyltransferase activity; this is somewhat controversial. Makes several contacts with the 16S rRNA in the 70S ribosome. In Nostoc sp. (strain PCC 7120 / SAG 25.82 / UTEX 2576), this protein is Large ribosomal subunit protein uL2.